A 220-amino-acid chain; its full sequence is Probable pterin-4-alpha-carbinolamine dehydratase, chloroplastic (220 aa).

The N-terminal 50 residues, 1–50, are a transit peptide targeting the chloroplast; the sequence is MAATSSSPPCNISASSLLLRQPSRSILKVFGLLPPVSRNNRKLGRLTVTR.

Belongs to the pterin-4-alpha-carbinolamine dehydratase family. As to quaternary structure, interacts with SDIR1. Interacts with AIRP2. Ubiquitinated by SDIR1. Ubiquitination leads to its subsequent degradation, thus controlling abscisic acid (ABA) signaling. Ubiquitinated by AIRP2. Ubiquitination leads to its subsequent degradation, thus controlling abscisic acid (ABA) signaling during drought stress.

The protein localises to the plastid. It is found in the chloroplast. The protein resides in the cell membrane. Its subcellular location is the nucleus. The catalysed reaction is (4aS,6R)-4a-hydroxy-L-erythro-5,6,7,8-tetrahydrobiopterin = (6R)-L-erythro-6,7-dihydrobiopterin + H2O. Functionally, involved in tetrahydrobiopterin biosynthesis. Interacts with and acts downstream of the E3 ubiquitin-protein ligase SDIR1 in abscisic acid (ABA) and salt stress signaling. Regulates the expression of the bZIP transcription factor ABI5, which mediates responses to ABA during seed germination and salt stress. The SDIR1-ATP1/SDIRIP1 complex plays an important role in ABA signaling through the ubiquitination pathway. Acts downstream of AIRP2 in regulation of ABA signaling during drought stress. This Arabidopsis thaliana (Mouse-ear cress) protein is Probable pterin-4-alpha-carbinolamine dehydratase, chloroplastic.